Consider the following 925-residue polypeptide: Probable replication restart protein PriA (925 aa).

Zn(2+) contacts are provided by cysteine 645, cysteine 648, cysteine 654, cysteine 657, cysteine 672, cysteine 675, cysteine 685, and cysteine 688.

Belongs to the helicase family. PriA subfamily. Interacts with DnaB (DR_0549). Component of the replication restart primosome. Requires Zn(2+) as cofactor.

Its function is as follows. Initiates the restart of stalled replication forks, which reloads the replicative helicase on sites other than the origin of replication. Recognizes abandoned replication forks and remodels them to uncover a helicase loading site. Promotes assembly of the primosome at these replication forks. Recognizes and binds DNA at stalled replication forks, also binds single-stranded (ss)DNA. In Deinococcus radiodurans (strain ATCC 13939 / DSM 20539 / JCM 16871 / CCUG 27074 / LMG 4051 / NBRC 15346 / NCIMB 9279 / VKM B-1422 / R1), this protein is Probable replication restart protein PriA.